The following is a 117-amino-acid chain: Ig heavy chain V region 5-76 (117 aa).

A signal peptide spans 1 to 19; it reads MNFVLSLIFLALILKGVQC. The interval 20 to 49 is framework-1; it reads EVHLVESGGGLVKPGGSLKLSCVVSGFTFN. Cysteine 41 and cysteine 115 are disulfide-bonded. The segment at 50 to 54 is complementarity-determining-1; the sequence is KYAMS. The tract at residues 55–68 is framework-2; sequence WVRQTPEKRLEWVA. Residues 69–85 are complementarity-determining-2; that stretch reads TISSGGLYTYYPDSVKG. The segment at 86–117 is framework-3; that stretch reads RFTISRDNAGNTLYLQMSSLRSEDTAMYYCAR.

This chain is Ig heavy chain V region 5-76, found in Mus musculus (Mouse).